Here is a 216-residue protein sequence, read N- to C-terminus: Ribosomal RNA large subunit methyltransferase E (216 aa).

Gly60, Trp62, Asp80, Asp96, and Asp121 together coordinate S-adenosyl-L-methionine. The Proton acceptor role is filled by Lys161.

The protein belongs to the class I-like SAM-binding methyltransferase superfamily. RNA methyltransferase RlmE family.

It localises to the cytoplasm. It catalyses the reaction uridine(2552) in 23S rRNA + S-adenosyl-L-methionine = 2'-O-methyluridine(2552) in 23S rRNA + S-adenosyl-L-homocysteine + H(+). In terms of biological role, specifically methylates the uridine in position 2552 of 23S rRNA at the 2'-O position of the ribose in the fully assembled 50S ribosomal subunit. The protein is Ribosomal RNA large subunit methyltransferase E of Pseudomonas syringae pv. syringae (strain B728a).